The sequence spans 724 residues: Probable methyltransferase PMT28 (724 aa).

Topologically, residues 1-22 are cytoplasmic; it reads MMERKREMGIAYFARRIKQPRG. Residues 23 to 43 form a helical; Signal-anchor for type II membrane protein membrane-spanning segment; it reads IWVKMTFIVVLGLCFVFFWSF. At 44–724 the chain is on the lumenal side; it reads LSSSASTFNV…LCAQKTLWRP (681 aa). The tract at residues 63-211 is disordered; that stretch reads EPVSSRTKSA…ISKKRKRKGP (149 aa). Over residues 71–98 the composition is skewed to basic and acidic residues; that stretch reads SAHEVSESSKLHERGKVESGSKSKEGKK. Residues 107–125 are compositionally biased toward basic residues; sequence HETKKKKEHAVSHPHKKKD. The segment covering 126–140 has biased composition (basic and acidic residues); sequence VPKPVVEEVVVKEDQ. Positions 141-173 are enriched in acidic residues; sequence EHEEAESDDSDQSNKEDGEEGTESDGNEGESDG. Residues asparagine 305, asparagine 316, and asparagine 568 are each glycosylated (N-linked (GlcNAc...) asparagine).

It belongs to the methyltransferase superfamily.

It is found in the golgi apparatus membrane. This chain is Probable methyltransferase PMT28, found in Arabidopsis thaliana (Mouse-ear cress).